Consider the following 350-residue polypeptide: Protein RecA (350 aa).

Residue 65-72 participates in ATP binding; that stretch reads GPESSGKT. Residues 329-350 are disordered; that stretch reads ASPDVKANPVKETEDDMADADI. The segment covering 341–350 has biased composition (acidic residues); sequence TEDDMADADI.

Belongs to the RecA family.

The protein resides in the cytoplasm. Can catalyze the hydrolysis of ATP in the presence of single-stranded DNA, the ATP-dependent uptake of single-stranded DNA by duplex DNA, and the ATP-dependent hybridization of homologous single-stranded DNAs. It interacts with LexA causing its activation and leading to its autocatalytic cleavage. In Pseudomonas fluorescens (strain ATCC BAA-477 / NRRL B-23932 / Pf-5), this protein is Protein RecA.